A 417-amino-acid chain; its full sequence is Gamma-glutamyl phosphate reductase (417 aa).

It belongs to the gamma-glutamyl phosphate reductase family.

The protein resides in the cytoplasm. The enzyme catalyses L-glutamate 5-semialdehyde + phosphate + NADP(+) = L-glutamyl 5-phosphate + NADPH + H(+). It functions in the pathway amino-acid biosynthesis; L-proline biosynthesis; L-glutamate 5-semialdehyde from L-glutamate: step 2/2. In terms of biological role, catalyzes the NADPH-dependent reduction of L-glutamate 5-phosphate into L-glutamate 5-semialdehyde and phosphate. The product spontaneously undergoes cyclization to form 1-pyrroline-5-carboxylate. This Escherichia coli O157:H7 protein is Gamma-glutamyl phosphate reductase.